Consider the following 210-residue polypeptide: Ribulose-phosphate 3-epimerase (210 aa).

A substrate-binding site is contributed by Ser-9. 3 residues coordinate a divalent metal cation: His-34, Asp-36, and His-68. Catalysis depends on Asp-36, which acts as the Proton acceptor. Substrate-binding positions include His-68, 144 to 147 (GFGG), 177 to 179 (DGG), and 199 to 200 (GS). Asp-177 contacts a divalent metal cation. Residue Asp-177 is the Proton donor of the active site.

This sequence belongs to the ribulose-phosphate 3-epimerase family. A divalent metal cation serves as cofactor.

It carries out the reaction D-ribulose 5-phosphate = D-xylulose 5-phosphate. It functions in the pathway carbohydrate degradation. Catalyzes the reversible epimerization of D-ribulose 5-phosphate to D-xylulose 5-phosphate. In Serratia marcescens, this protein is Ribulose-phosphate 3-epimerase.